The primary structure comprises 185 residues: Translocon-associated protein subunit gamma (185 aa).

Met-1 bears the N-acetylmethionine mark. Residues 1–27 (MAPKGSCKQQSEEDLLLQDFSRNLSAK) are Lumenal-facing. The residue at position 11 (Ser-11) is a Phosphoserine. Residues 28–48 (SSALFFGNAFIVSAIPIWLYW) traverse the membrane as a helical segment. Residues 49–54 (RIWHMD) lie on the Cytoplasmic side of the membrane. The chain crosses the membrane as a helical span at residues 55 to 76 (LIQSAVLYSVMTLVSTYLVAFA). The Lumenal segment spans residues 77 to 135 (YKNVKFVLKHKVAQKREDAVSKEVTRKLSEADNRKMSRKEKDERILWKKNEVADYEATT). Ser-105 is subject to Phosphoserine. The helical transmembrane segment at 136 to 157 (FSIFYNNTLFLVVVIVASFFIL) threads the bilayer. Residues 158 to 163 (KNFNPT) are Cytoplasmic-facing. The helical transmembrane segment at 164–184 (VNYILSISASSGLIALLSTGS) threads the bilayer.

This sequence belongs to the TRAP-gamma family. In terms of assembly, heterotetramer of TRAP-alpha, TRAP-beta, TRAP-delta and TRAP-gamma.

It is found in the endoplasmic reticulum membrane. In terms of biological role, TRAP proteins are part of a complex whose function is to bind calcium to the ER membrane and thereby regulate the retention of ER resident proteins. The protein is Translocon-associated protein subunit gamma (SSR3) of Pongo abelii (Sumatran orangutan).